The chain runs to 397 residues: Tryptophan synthase beta chain (397 aa).

The residue at position 88 (Lys-88) is an N6-(pyridoxal phosphate)lysine.

This sequence belongs to the TrpB family. As to quaternary structure, tetramer of two alpha and two beta chains. Requires pyridoxal 5'-phosphate as cofactor.

It catalyses the reaction (1S,2R)-1-C-(indol-3-yl)glycerol 3-phosphate + L-serine = D-glyceraldehyde 3-phosphate + L-tryptophan + H2O. It participates in amino-acid biosynthesis; L-tryptophan biosynthesis; L-tryptophan from chorismate: step 5/5. In terms of biological role, the beta subunit is responsible for the synthesis of L-tryptophan from indole and L-serine. The chain is Tryptophan synthase beta chain (trpB) from Haemophilus influenzae (strain ATCC 51907 / DSM 11121 / KW20 / Rd).